The following is a 514-amino-acid chain: ATP synthase subunit alpha (514 aa).

Residue 170–177 (GDRQIGKT) coordinates ATP.

The protein belongs to the ATPase alpha/beta chains family. As to quaternary structure, F-type ATPases have 2 components, CF(1) - the catalytic core - and CF(0) - the membrane proton channel. CF(1) has five subunits: alpha(3), beta(3), gamma(1), delta(1), epsilon(1). CF(0) has three main subunits: a(1), b(2) and c(9-12). The alpha and beta chains form an alternating ring which encloses part of the gamma chain. CF(1) is attached to CF(0) by a central stalk formed by the gamma and epsilon chains, while a peripheral stalk is formed by the delta and b chains.

Its subcellular location is the cell inner membrane. The enzyme catalyses ATP + H2O + 4 H(+)(in) = ADP + phosphate + 5 H(+)(out). Functionally, produces ATP from ADP in the presence of a proton gradient across the membrane. The alpha chain is a regulatory subunit. This is ATP synthase subunit alpha from Stutzerimonas stutzeri (strain A1501) (Pseudomonas stutzeri).